Reading from the N-terminus, the 305-residue chain is Heterogeneous nuclear ribonucleoprotein A0 (305 aa).

The residue at position 1 (methionine 1) is an N-acetylmethionine. The 80-residue stretch at cysteine 7–glutamate 86 folds into the RRM 1 domain. At serine 68 the chain carries Phosphoserine. Lysine 80 participates in a covalent cross-link: Glycyl lysine isopeptide (Lys-Gly) (interchain with G-Cter in SUMO2). Serine 84 carries the phosphoserine; by MAPKAPK2 modification. Glycyl lysine isopeptide (Lys-Gly) (interchain with G-Cter in SUMO2) cross-links involve residues lysine 96, lysine 98, lysine 99, and lysine 106. The 78-residue stretch at lysine 98–proline 175 folds into the RRM 2 domain. Lysine 133 is subject to N6-acetyllysine. Arginine 139 carries the post-translational modification Omega-N-methylarginine. Glycyl lysine isopeptide (Lys-Gly) (interchain with G-Cter in SUMO2) cross-links involve residues lysine 154, lysine 159, lysine 172, and lysine 176. Disordered regions lie at residues valine 174–glycine 214 and glutamine 262–phenylalanine 305. 2 stretches are compositionally biased toward gly residues: residues serine 181–arginine 200 and lysine 269–tryptophan 281. Serine 188 carries the post-translational modification Phosphoserine. Position 284 is an omega-N-methylarginine (arginine 284). Positions tyrosine 290–phenylalanine 305 are enriched in gly residues. Arginine 291 carries the asymmetric dimethylarginine; alternate modification. Position 291 is a dimethylated arginine; alternate (arginine 291). Position 291 is an omega-N-methylarginine; alternate (arginine 291).

In terms of processing, phosphorylated at Ser-84 by MAPKAPK2 in response to LPS treatment, promoting stabilization of GADD45A mRNA. Arg-291 is dimethylated, probably to asymmetric dimethylarginine.

The protein resides in the nucleus. Functionally, mRNA-binding component of ribonucleosomes. Specifically binds AU-rich element (ARE)-containing mRNAs. Involved in post-transcriptional regulation of cytokines mRNAs. The chain is Heterogeneous nuclear ribonucleoprotein A0 (HNRNPA0) from Homo sapiens (Human).